The primary structure comprises 154 residues: Superoxide dismutase [Cu-Zn] (154 aa).

His-47, His-49, and His-64 together coordinate Cu cation. A disulfide bond links Cys-58 and Cys-147. His-64, His-72, His-81, and Asp-84 together coordinate Zn(2+). His-121 contributes to the Cu cation binding site. Arg-144 contributes to the substrate binding site.

Belongs to the Cu-Zn superoxide dismutase family. Homodimer. Cu cation is required as a cofactor. It depends on Zn(2+) as a cofactor.

It is found in the cytoplasm. It catalyses the reaction 2 superoxide + 2 H(+) = H2O2 + O2. Its function is as follows. Destroys radicals which are normally produced within the cells and which are toxic to biological systems. The sequence is that of Superoxide dismutase [Cu-Zn] (SOD1) from Claviceps purpurea (strain 20.1) (Ergot fungus).